Consider the following 126-residue polypeptide: Large ribosomal subunit protein bL12 (126 aa).

The span at 107–116 (EDAEKAKSQL) shows a compositional bias: basic and acidic residues. The tract at residues 107–126 (EDAEKAKSQLEEAGATVELK) is disordered.

This sequence belongs to the bacterial ribosomal protein bL12 family. In terms of assembly, homodimer. Part of the ribosomal stalk of the 50S ribosomal subunit. Forms a multimeric L10(L12)X complex, where L10 forms an elongated spine to which 2 to 4 L12 dimers bind in a sequential fashion. Binds GTP-bound translation factors.

Forms part of the ribosomal stalk which helps the ribosome interact with GTP-bound translation factors. Is thus essential for accurate translation. In Bifidobacterium adolescentis (strain ATCC 15703 / DSM 20083 / NCTC 11814 / E194a), this protein is Large ribosomal subunit protein bL12.